A 121-amino-acid chain; its full sequence is Flagellar protein FliT (121 aa).

Residues 1–50 (MNHAPHLYFAWQQLVDKSQLMLRLATEEQWDELIASEMAYVNAVQEIAHL) form a required for homodimerization region. The fliD binding stretch occupies residues 60–98 (MQEQLRPMLRLILDNESKVKQLLQIRMDELAKLVGQSSV).

The protein belongs to the FliT family. Homodimer. Interacts with FliD and FlhC.

Its subcellular location is the cytoplasm. It is found in the cytosol. Dual-function protein that regulates the transcription of class 2 flagellar operons and that also acts as an export chaperone for the filament-capping protein FliD. As a transcriptional regulator, acts as an anti-FlhDC factor; it directly binds FlhC, thus inhibiting the binding of the FlhC/FlhD complex to class 2 promoters, resulting in decreased expression of class 2 flagellar operons. As a chaperone, effects FliD transition to the membrane by preventing its premature polymerization, and by directing it to the export apparatus. This is Flagellar protein FliT from Shigella sonnei (strain Ss046).